A 147-amino-acid polypeptide reads, in one-letter code: Deoxyuridine 5'-triphosphate nucleotidohydrolase (147 aa).

Residues Arg67–Gly69, Asn80, and Thr84–Asp86 each bind substrate.

The protein belongs to the dUTPase family. The cofactor is Mg(2+).

The enzyme catalyses dUTP + H2O = dUMP + diphosphate + H(+). Its pathway is pyrimidine metabolism; dUMP biosynthesis; dUMP from dCTP (dUTP route): step 2/2. Its function is as follows. This enzyme is involved in nucleotide metabolism: it produces dUMP, the immediate precursor of thymidine nucleotides and it decreases the intracellular concentration of dUTP so that uracil cannot be incorporated into DNA. In Anaeromyxobacter dehalogenans (strain 2CP-1 / ATCC BAA-258), this protein is Deoxyuridine 5'-triphosphate nucleotidohydrolase.